A 675-amino-acid chain; its full sequence is Cysteine-rich receptor-like protein kinase 25 (675 aa).

An N-terminal signal peptide occupies residues 1 to 25 (MSSCFKSSVSLFSVFLFMILKTVTS). The Extracellular portion of the chain corresponds to 26 to 281 (DPTYLYHICP…IPSEKGKGKN (256 aa)). 2 consecutive Gnk2-homologous domains span residues 28-134 (TYLY…NQSI) and 140-247 (IRPG…LYPF). N-linked (GlcNAc...) asparagine glycans are attached at residues Asn-36, Asn-43, Asn-77, Asn-106, Asn-131, Asn-151, Asn-161, Asn-188, Asn-249, and Asn-281. Residues 282 to 302 (LTVIVTAIAVPVSVCVLLLGA) traverse the membrane as a helical segment. Residues 303 to 675 (MCWLLARRRN…DSSITIVYPR (373 aa)) lie on the Cytoplasmic side of the membrane. Residues 347 to 622 (FSESNKLGHG…DILVMMNSFT (276 aa)) enclose the Protein kinase domain. ATP is bound by residues 353-361 (LGHGGFGEV) and Lys-375. Phosphotyrosine is present on Tyr-420. Asp-472 (proton acceptor) is an active-site residue. Ser-476 bears the Phosphoserine mark. At Thr-512 the chain carries Phosphothreonine. Tyr-520 bears the Phosphotyrosine mark. The disordered stretch occupies residues 638–661 (MKDSRDPRSGGSASDHSATSKSLP). A compositionally biased stretch (polar residues) spans 648-661 (GSASDHSATSKSLP).

The protein belongs to the protein kinase superfamily. Ser/Thr protein kinase family. CRK subfamily.

The protein resides in the membrane. The enzyme catalyses L-seryl-[protein] + ATP = O-phospho-L-seryl-[protein] + ADP + H(+). The catalysed reaction is L-threonyl-[protein] + ATP = O-phospho-L-threonyl-[protein] + ADP + H(+). The sequence is that of Cysteine-rich receptor-like protein kinase 25 (CRK25) from Arabidopsis thaliana (Mouse-ear cress).